A 98-amino-acid chain; its full sequence is Large ribosomal subunit protein uL23 (98 aa).

Belongs to the universal ribosomal protein uL23 family. In terms of assembly, part of the 50S ribosomal subunit. Contacts protein L29, and trigger factor when it is bound to the ribosome.

One of the early assembly proteins it binds 23S rRNA. One of the proteins that surrounds the polypeptide exit tunnel on the outside of the ribosome. Forms the main docking site for trigger factor binding to the ribosome. The polypeptide is Large ribosomal subunit protein uL23 (Rickettsia africae (strain ESF-5)).